The sequence spans 481 residues: Ribulose bisphosphate carboxylase large chain (481 aa).

Positions 1 to 2 (MS) are excised as a propeptide. Residue Pro-3 is modified to N-acetylproline. Lys-14 carries the post-translational modification N6,N6,N6-trimethyllysine. 2 residues coordinate substrate: Asn-123 and Thr-173. Catalysis depends on Lys-175, which acts as the Proton acceptor. Lys-177 lines the substrate pocket. The Mg(2+) site is built by Lys-201, Asp-203, and Glu-204. An N6-carboxylysine modification is found at Lys-201. His-294 (proton acceptor) is an active-site residue. Residues Arg-295, His-327, and Ser-379 each coordinate substrate.

Belongs to the RuBisCO large chain family. Type I subfamily. Heterohexadecamer of 8 large chains and 8 small chains; disulfide-linked. The disulfide link is formed within the large subunit homodimers. The cofactor is Mg(2+). In terms of processing, the disulfide bond which can form in the large chain dimeric partners within the hexadecamer appears to be associated with oxidative stress and protein turnover.

The protein localises to the plastid. The enzyme catalyses 2 (2R)-3-phosphoglycerate + 2 H(+) = D-ribulose 1,5-bisphosphate + CO2 + H2O. It catalyses the reaction D-ribulose 1,5-bisphosphate + O2 = 2-phosphoglycolate + (2R)-3-phosphoglycerate + 2 H(+). In terms of biological role, ruBisCO catalyzes two reactions: the carboxylation of D-ribulose 1,5-bisphosphate, the primary event in carbon dioxide fixation, as well as the oxidative fragmentation of the pentose substrate in the photorespiration process. Both reactions occur simultaneously and in competition at the same active site. This is Ribulose bisphosphate carboxylase large chain from Cuscuta sandwichiana (Kauna'oa).